Here is a 190-residue protein sequence, read N- to C-terminus: Translation initiation factor IF-3 (190 aa).

The protein belongs to the IF-3 family. Monomer.

The protein resides in the cytoplasm. In terms of biological role, IF-3 binds to the 30S ribosomal subunit and shifts the equilibrium between 70S ribosomes and their 50S and 30S subunits in favor of the free subunits, thus enhancing the availability of 30S subunits on which protein synthesis initiation begins. This is Translation initiation factor IF-3 from Prochlorococcus marinus (strain MIT 9301).